The following is a 504-amino-acid chain: ATP synthase subunit alpha 2 (504 aa).

169 to 176 (GDRQTGKT) provides a ligand contact to ATP.

Belongs to the ATPase alpha/beta chains family. As to quaternary structure, F-type ATPases have 2 components, CF(1) - the catalytic core - and CF(0) - the membrane proton channel. CF(1) has five subunits: alpha(3), beta(3), gamma(1), delta(1), epsilon(1). CF(0) has three main subunits: a(1), b(2) and c(9-12). The alpha and beta chains form an alternating ring which encloses part of the gamma chain. CF(1) is attached to CF(0) by a central stalk formed by the gamma and epsilon chains, while a peripheral stalk is formed by the delta and b chains.

Its subcellular location is the cell membrane. It catalyses the reaction ATP + H2O + 4 H(+)(in) = ADP + phosphate + 5 H(+)(out). Its function is as follows. Produces ATP from ADP in the presence of a proton gradient across the membrane. The alpha chain is a regulatory subunit. In Listeria innocua serovar 6a (strain ATCC BAA-680 / CLIP 11262), this protein is ATP synthase subunit alpha 2.